Here is a 504-residue protein sequence, read N- to C-terminus: MNPYDAKDRRWILSMFFFVVLFCNNVSTSSSSSEVITIKPRHLSLLKSALQRSSGEQSDLWRPLTDQGWSPCIDLGNSPSLPDKTAGYVQVFLDGGLNQQRMGICDAVAVAKILNATLVIPYLEVNPVWQDSSSFVDIFDVDHFIDSLKDDIRVVRELPDEYSWSTREYYGTAVRETRVKTAPVHASANWYIENVSPVLQSYGIAAISPFSHRLSFDHLPAEIQRLRCKVNFQALRFVPHITSLGDALVSRLRNPSWRSNKEQKNVDHLGDMTNPHRRQEPGKFAVLHLRFDKDMAAHSACDFGGGKAEKLSLAKYRQMIWQGRVLNSQFTDEELRSQGRCPLTPEEMGLLLAAFGFDNNTRLYLASHKVYGGEARISTLRQVFPRMEDKRSLASSEERARIKGKASLLAALDYYVSMHSDIFISASPGNMHNALVGHRTFENLKTIRPNMALIGQLFLNKSITWVDFQQALGEGHVNRQGQIRLRKPKQSIYTYPAPDCMCHV.

A helical; Signal-anchor for type II membrane protein transmembrane segment spans residues 11 to 27 (WILSMFFFVVLFCNNVS). A glycan (N-linked (GlcNAc...) asparagine) is linked at Asn115. 288–290 (HLR) is a substrate binding site. N-linked (GlcNAc...) asparagine glycosylation is found at Asn359 and Asn460.

Belongs to the glycosyltransferase GT106 family.

It localises to the membrane. The protein operates within glycan metabolism. This Arabidopsis thaliana (Mouse-ear cress) protein is O-fucosyltransferase 39.